The sequence spans 88 residues: uncharacterized protein (88 aa).

Transmembrane regions (helical) follow at residues 8–28 and 45–65; these read IFLS…SIFF and ELLR…VINL.

The protein resides in the membrane. This is an uncharacterized protein from Saccharomyces cerevisiae (strain ATCC 204508 / S288c) (Baker's yeast).